A 122-amino-acid chain; its full sequence is Large ribosomal subunit protein uL14 (122 aa).

The protein belongs to the universal ribosomal protein uL14 family. As to quaternary structure, part of the 50S ribosomal subunit. Forms a cluster with proteins L3 and L19. In the 70S ribosome, L14 and L19 interact and together make contacts with the 16S rRNA in bridges B5 and B8.

Binds to 23S rRNA. Forms part of two intersubunit bridges in the 70S ribosome. The chain is Large ribosomal subunit protein uL14 from Mesomycoplasma hyopneumoniae (strain 232) (Mycoplasma hyopneumoniae).